Reading from the N-terminus, the 530-residue chain is UDP-glucuronosyltransferase 1A8 (530 aa).

The signal sequence occupies residues 1–25 (MARTGWTSPIPLCVSLLLTCGFAEA). N71, N292, and N344 each carry an N-linked (GlcNAc...) asparagine glycan. A helical membrane pass occupies residues 488–504 (VIGFLLAVVLTVAFITF).

It belongs to the UDP-glycosyltransferase family. As to quaternary structure, homodimer. Homooligomer. Interacts with UGT1A1, UGT1A3, UGT1A4, UGT1A6, UGT1A7, UGT1A9 and UGT1A10 to form heterodimers. Isoform 1 interacts with isoform 2/i2 suggesting that oligomerization is involved in negative regulation of transferase activity by isoform 2. Isoform 1 also interacts with respective i2 isoforms of UGT1A1, UGT1A3, UGT1A4, UGT1A6, UGT1A7, UGT1A9 and UGT1A10. Expressed in kidney, colon and small intestine. Not expressed in liver. In terms of tissue distribution, expressed in liver, kidney, colon and small intestine.

It is found in the endoplasmic reticulum membrane. The catalysed reaction is glucuronate acceptor + UDP-alpha-D-glucuronate = acceptor beta-D-glucuronoside + UDP + H(+). It carries out the reaction 17beta-estradiol + UDP-alpha-D-glucuronate = 17beta-estradiol 3-O-(beta-D-glucuronate) + UDP + H(+). It catalyses the reaction 17alpha-estradiol + UDP-alpha-D-glucuronate = 17alpha-estradiol 3-O-(beta-D-glucuronate) + UDP + H(+). The enzyme catalyses estrone + UDP-alpha-D-glucuronate = estrone 3-O-(beta-D-glucuronate) + UDP + H(+). The catalysed reaction is 16alpha,17alpha-estriol + UDP-alpha-D-glucuronate = 16alpha,17alpha-estriol 3-O-(beta-D-glucuronate) + UDP + H(+). It carries out the reaction 2-hydroxy-17beta-estradiol + UDP-alpha-D-glucuronate = 2-hydroxy-17beta-estradiol 3-O-(beta-D-glucuronate) + UDP + H(+). It catalyses the reaction 2-hydroxy-17beta-estradiol + UDP-alpha-D-glucuronate = 17beta-estradiol 2-O-(beta-D-glucuronate) + UDP + H(+). The enzyme catalyses 2-hydroxyestrone + UDP-alpha-D-glucuronate = 2-hydroxyestrone 3-O-(beta-D-glucuronate) + UDP + H(+). The catalysed reaction is 4-hydroxy-17beta-estradiol + UDP-alpha-D-glucuronate = 4-hydroxy-17beta-estradiol 3-O-(beta-D-glucuronate) + UDP + H(+). It carries out the reaction 4-hydroxy-17beta-estradiol + UDP-alpha-D-glucuronate = 17beta-estradiol 4-O-(beta-D-glucuronate) + UDP + H(+). It catalyses the reaction 4-hydroxyestrone + UDP-alpha-D-glucuronate = 4-hydroxyestrone 3-O-(beta-D-glucuronate) + UDP + H(+). The enzyme catalyses 4-hydroxyestrone + UDP-alpha-D-glucuronate = estrone 4-O-(beta-D-glucuronate) + UDP + H(+). The catalysed reaction is 2-methoxy-17beta-estradiol + UDP-alpha-D-glucuronate = 2-methoxy-17beta-estradiol 3-O-(beta-D-glucuronate) + UDP + H(+). It carries out the reaction 2-methoxyestrone + UDP-alpha-D-glucuronate = 2-methoxyestrone 3-O-(beta-D-glucuronate) + UDP + H(+). It catalyses the reaction 4-methoxy-17beta-estradiol + UDP-alpha-D-glucuronate = 4-methoxy-17beta-estradiol 3-O-(beta-D-glucuronate) + UDP + H(+). The enzyme catalyses 4-methoxyestrone + UDP-alpha-D-glucuronate = 4-methoxyestrone 3-O-(beta-D-glucuronate) + UDP + H(+). The catalysed reaction is 17beta-hydroxy-5alpha-androstan-3-one + UDP-alpha-D-glucuronate = 5alpha-dihydrotestosterone 17-O-(beta-D-glucuronate) + UDP + H(+). It carries out the reaction 5alpha-dihydrotestosterone 17-O-(beta-D-glucuronate) + UDP-alpha-D-glucuronate = 5alpha-dihydrotestosterone 17-O-[beta-D-glucuronosyl-(1-&gt;2)-glucuronate] + UDP + H(+). It catalyses the reaction prunetin + UDP-alpha-D-glucuronate = prunetin-4'-O-beta-D-glucuronide + UDP. The enzyme catalyses prunetin + UDP-alpha-D-glucuronate = prunetin-5-O-beta-D-glucuronide + UDP. The catalysed reaction is candesartan + UDP-alpha-D-glucuronate = candesartan O-beta-D-glucuronoside + UDP. It carries out the reaction mycophenolate + UDP-alpha-D-glucuronate = mycophenolate 7-O-beta-D-glucuronide + UDP + H(+). It catalyses the reaction (E)-ferulate + UDP-alpha-D-glucuronate = (E)-4-O-(beta-D-glucuronosyl)-ferulate + UDP + H(+). The enzyme catalyses (E)-ferulate + UDP-alpha-D-glucuronate = (E)-ferulic acid beta-D-glucuronate ester + UDP. In terms of biological role, UDP-glucuronosyltransferase (UGT) that catalyzes phase II biotransformation reactions in which lipophilic substrates are conjugated with glucuronic acid to increase the metabolite's water solubility, thereby facilitating excretion into either the urine or bile. Essential for the elimination and detoxification of drugs, xenobiotics and endogenous compounds. Catalyzes the glucuronidation of endogenous steroid hormones such as androgens and estrogens. Produces dihydrotestosterone (DHT) diglucuronide from the DHT after two subsequent glucoronidation steps. Involved in the glucuronidation of the phytochemical ferulic acid at the phenolic or the carboxylic acid group. Also catalyzes the glucuronidation of the isoflavones genistein, daidzein, glycitein, formononetin, biochanin A and prunetin, which are phytoestrogens with anticancer and cardiovascular properties. Involved in the glucuronidation of the AGTR1 angiotensin receptor antagonist caderastan, a drug which can inhibit the effect of angiotensin II. Also metabolizes mycophenolate, an immunosuppressive agent. Its function is as follows. Lacks UGT glucuronidation activity but acts as a negative regulator of isoform 1. In Homo sapiens (Human), this protein is UDP-glucuronosyltransferase 1A8.